We begin with the raw amino-acid sequence, 454 residues long: UDP-N-acetylmuramoylalanine--D-glutamate ligase (454 aa).

119–125 (GSNGKTT) contacts ATP.

Belongs to the MurCDEF family.

The protein resides in the cytoplasm. It carries out the reaction UDP-N-acetyl-alpha-D-muramoyl-L-alanine + D-glutamate + ATP = UDP-N-acetyl-alpha-D-muramoyl-L-alanyl-D-glutamate + ADP + phosphate + H(+). Its pathway is cell wall biogenesis; peptidoglycan biosynthesis. Cell wall formation. Catalyzes the addition of glutamate to the nucleotide precursor UDP-N-acetylmuramoyl-L-alanine (UMA). This is UDP-N-acetylmuramoylalanine--D-glutamate ligase from Latilactobacillus sakei subsp. sakei (strain 23K) (Lactobacillus sakei subsp. sakei).